We begin with the raw amino-acid sequence, 132 residues long: MAYSKGVSGTLSDYTHLRTLPALLSVVFVIAGLYQFGGISDVTITWLSNYTLTSTHAMGASIGAYALAFASSETKQFDNYQDFEKVLIAAGPAVILGYEYIQPVTDLINTTSNAGPIAAFVVTVVAWGVAVR.

The protein resides in the virion membrane. Its function is as follows. Envelope protein that may play a role in host-cell attachment and viral genome entry. The sequence is that of Matrix protein from Halorubrum pleomorphic virus 1 (HRPV-1).